A 165-amino-acid chain; its full sequence is Lipoprotein signal peptidase (165 aa).

A run of 3 helical transmembrane segments spans residues tryptophan 12 to glutamine 32, tryptophan 70 to serine 90, and alanine 102 to valine 122. Active-site residues include aspartate 123 and aspartate 141. Residues phenylalanine 137–leucine 157 traverse the membrane as a helical segment.

Belongs to the peptidase A8 family.

It is found in the cell inner membrane. The enzyme catalyses Release of signal peptides from bacterial membrane prolipoproteins. Hydrolyzes -Xaa-Yaa-Zaa-|-(S,diacylglyceryl)Cys-, in which Xaa is hydrophobic (preferably Leu), and Yaa (Ala or Ser) and Zaa (Gly or Ala) have small, neutral side chains.. It participates in protein modification; lipoprotein biosynthesis (signal peptide cleavage). Functionally, this protein specifically catalyzes the removal of signal peptides from prolipoproteins. This chain is Lipoprotein signal peptidase, found in Klebsiella aerogenes (strain ATCC 13048 / DSM 30053 / CCUG 1429 / JCM 1235 / KCTC 2190 / NBRC 13534 / NCIMB 10102 / NCTC 10006 / CDC 819-56) (Enterobacter aerogenes).